The primary structure comprises 266 residues: Carboxy-S-adenosyl-L-methionine synthase (266 aa).

The disordered stretch occupies residues 1–24; sequence MPKRETQSLHDTQQQPGPTAPQRD. S-adenosyl-L-methionine is bound by residues Tyr58, 83–85, 108–109, 136–137, Asn151, and Arg218; these read GCS, DN, and DI.

The protein belongs to the class I-like SAM-binding methyltransferase superfamily. Cx-SAM synthase family. In terms of assembly, homodimer.

It catalyses the reaction prephenate + S-adenosyl-L-methionine = carboxy-S-adenosyl-L-methionine + 3-phenylpyruvate + H2O. Catalyzes the conversion of S-adenosyl-L-methionine (SAM) to carboxy-S-adenosyl-L-methionine (Cx-SAM). This Yersinia enterocolitica serotype O:8 / biotype 1B (strain NCTC 13174 / 8081) protein is Carboxy-S-adenosyl-L-methionine synthase.